Consider the following 66-residue polypeptide: MNMRYTLMPERREGPVDPMPQSPSPSDEGGGPRRPETGSPDKDNLLKRMRKVDPKQAERYRQRTGE.

The disordered stretch occupies residues M1–E66. Positions G30 to E66 are enriched in basic and acidic residues. E66 is covalently cross-linked (Isoglutamyl lysine isopeptide (Glu-Lys) (interchain with K-? in acceptor proteins)).

It belongs to the ubiquitin-like protein UBact family.

In terms of biological role, may function as a protein modifier covalently attached to lysine residues of substrate proteins. This may serve to target the modified proteins for degradation by proteasomes. This chain is Prokaryotic ubiquitin-like protein UBact, found in Nitrospira moscoviensis.